The primary structure comprises 299 residues: Mycothiol acetyltransferase (299 aa).

2 consecutive N-acetyltransferase domains span residues Met-1–Gly-156 and Val-149–Leu-299. Position 33 (Glu-33) interacts with 1D-myo-inositol 2-(L-cysteinylamino)-2-deoxy-alpha-D-glucopyranoside. Residues Leu-75 to Val-77 and Arg-83 to Thr-88 contribute to the acetyl-CoA site. 3 residues coordinate 1D-myo-inositol 2-(L-cysteinylamino)-2-deoxy-alpha-D-glucopyranoside: Glu-176, Lys-218, and Glu-231. Residues Val-235 to Ile-237 and Gln-242 to Arg-248 each bind acetyl-CoA. Tyr-269 provides a ligand contact to 1D-myo-inositol 2-(L-cysteinylamino)-2-deoxy-alpha-D-glucopyranoside. An acetyl-CoA-binding site is contributed by Asn-274–His-279.

It belongs to the acetyltransferase family. MshD subfamily. Monomer.

It catalyses the reaction 1D-myo-inositol 2-(L-cysteinylamino)-2-deoxy-alpha-D-glucopyranoside + acetyl-CoA = mycothiol + CoA + H(+). Its function is as follows. Catalyzes the transfer of acetyl from acetyl-CoA to desacetylmycothiol (Cys-GlcN-Ins) to form mycothiol. This Rhodococcus erythropolis (strain PR4 / NBRC 100887) protein is Mycothiol acetyltransferase.